Reading from the N-terminus, the 156-residue chain is Arginine repressor (156 aa).

The protein belongs to the ArgR family.

Its subcellular location is the cytoplasm. It participates in amino-acid biosynthesis; L-arginine biosynthesis [regulation]. Functionally, regulates arginine biosynthesis genes. The polypeptide is Arginine repressor (Shewanella piezotolerans (strain WP3 / JCM 13877)).